The primary structure comprises 157 residues: MEKVPMTTAGFESLKEELRWRQQEERPRIIEAISEARAHGDLSGNAEYHAAKEAQSHNEGRINELEDYIARAEVINVSRLSGDKIKFGATIKLLDEDTEEKKVYQIVGDQEADVKTGKISISSPIARALIGKQEGDVIEVNAPGGAHNYEIIEVQYI.

It belongs to the GreA/GreB family.

Functionally, necessary for efficient RNA polymerase transcription elongation past template-encoded arresting sites. The arresting sites in DNA have the property of trapping a certain fraction of elongating RNA polymerases that pass through, resulting in locked ternary complexes. Cleavage of the nascent transcript by cleavage factors such as GreA or GreB allows the resumption of elongation from the new 3'terminus. GreA releases sequences of 2 to 3 nucleotides. This is Transcription elongation factor GreA from Bartonella henselae (strain ATCC 49882 / DSM 28221 / CCUG 30454 / Houston 1) (Rochalimaea henselae).